We begin with the raw amino-acid sequence, 702 residues long: ATP-dependent RNA helicase DDX4 (702 aa).

The tract at residues 22–228 is disordered; the sequence is FEKDKYSSGA…YIPPPPPEDE (207 aa). Positions 29–46 are enriched in polar residues; the sequence is SGANGDTFNRTSASSDIG. Composition is skewed to gly residues over residues 58-68 and 125-137; these read GGFGRGKGFGN and RGSFRGCRGGFGL. 2 stretches are compositionally biased toward polar residues: residues 141-150 and 195-215; these read NSESDQDQGT and SGKNSWKSETEGGESSDSQGP. A phosphoserine mark is found at Ser-195 and Ser-199. An interaction with RANBP9 region spans residues 201-220; it reads KSETEGGESSDSQGPKVTYI. Positions 261–289 match the Q motif motif; that stretch reads LTFEEANLCQTLNNNIAKAGYTKLTPVQK. The Helicase ATP-binding domain maps to 292 to 475; the sequence is IPIVLAGRDL…GDFLKSSYLF (184 aa). ATP is bound at residue 305-312; the sequence is AQTGSGKT. The DEAD box signature appears at 419–422; that stretch reads DEAD. Residues 503–648 enclose the Helicase C-terminal domain; the sequence is KLVEILRNIG…DVPAWLEEIA (146 aa). Residues 681 to 693 show a composition bias toward polar residues; the sequence is TLNTAGISSSQAP. The disordered stretch occupies residues 681–702; it reads TLNTAGISSSQAPNPVDDESWD. Ser-700 carries the post-translational modification Phosphoserine.

This sequence belongs to the DEAD box helicase family. DDX4/VASA subfamily. In terms of assembly, found in a mRNP complex, at least composed of TDRD1, TDRD6, TDRD7 and DDX4. Interacts with RANBP9. Interacts with RANBP10. Interacts with PIWIL2 and MAEL. Interacts with BMAL1 and CLOCK. Interacts with Tex19.1 and, probably, Tex19.2. Interacts with RBM46. In terms of tissue distribution, testis-specific.

It is found in the cytoplasm. It localises to the perinuclear region. The catalysed reaction is ATP + H2O = ADP + phosphate + H(+). In terms of biological role, ATP-dependent RNA helicase required during spermatogenesis to repress transposable elements and preventing their mobilization, which is essential for the germline integrity. Acts via the piRNA metabolic process, which mediates the repression of transposable elements during meiosis by forming complexes composed of piRNAs and Piwi proteins and governs the methylation and subsequent repression of transposons. Involved in the secondary piRNAs metabolic process, the production of piRNAs in fetal male germ cells through a ping-pong amplification cycle. Required for PIWIL2 slicing-triggered piRNA biogenesis: helicase activity enables utilization of one of the slice cleavage fragments generated by PIWIL2 and processing these pre-piRNAs into piRNAs. This is ATP-dependent RNA helicase DDX4 from Mus musculus (Mouse).